A 206-amino-acid polypeptide reads, in one-letter code: Small ribosomal subunit protein uS4 (206 aa).

The 61-residue stretch at 96–156 folds into the S4 RNA-binding domain; it reads GRLDNVVYRM…EKSKKQARIK (61 aa).

The protein belongs to the universal ribosomal protein uS4 family. In terms of assembly, part of the 30S ribosomal subunit. Contacts protein S5. The interaction surface between S4 and S5 is involved in control of translational fidelity.

Functionally, one of the primary rRNA binding proteins, it binds directly to 16S rRNA where it nucleates assembly of the body of the 30S subunit. In terms of biological role, with S5 and S12 plays an important role in translational accuracy. The chain is Small ribosomal subunit protein uS4 from Histophilus somni (strain 2336) (Haemophilus somnus).